A 91-amino-acid polypeptide reads, in one-letter code: Bacterial microcompartment shell protein PduJ (91 aa).

Residues Ala-4–Pro-88 form the BMC domain.

Belongs to the bacterial microcompartments protein family. As to quaternary structure, homohexamer with a central pore of about 5.7 Angstroms in diameter. Interacts with PduP, which targets PduP to the BMC.

The protein localises to the bacterial microcompartment. It functions in the pathway polyol metabolism; 1,2-propanediol degradation. One of the major shell proteins of the bacterial microcompartment (BMC) dedicated to 1,2-propanediol (1,2-PD) degradation. The isolated BMC shell component protein ratio for J:A:B':B:K:T:U is approximately 15:10:7:6:1:1:2. At least one of PduA or PduJ is required for BMC assembly; it must be encoded as the first gene in the pdu operon. Required for structural integrity of BMCs and to mitigate propionaldehyde toxicity, probably joins facets responsible for BMC closure. Edge residues (particularly Lys-25) are important for function and assembly of the BMC. 80% identical to PduA; although their pore regions appear structurally identical, unlike PduA plays no role in 1,2-PD diffusion into or out of the BMC shell. If pduJ is cloned in the chromosomal position of pduA it is able to complement a pduA deletion; it then has a functional pore as it assumes the transport functions of PduA. Overexpression of this protein leads to aberrant filaments that extend the length of the cell, cross the cleavage furrow and impair division. The filaments form nanotubes with a hollow center. Modeling suggests PduJ is probably the hub for binding multiple enzymes to the interior of the BMC; modeling suggests PduC, PduD, PduG and PduM are targeted to PduJ. In terms of biological role, the 1,2-propanediol (1,2-PD) degradation bacterial microcompartment (BMC) concentrates low levels of 1,2-PD catabolic enzymes, concentrates volatile reaction intermediates thus enhancing pathway flux and keeps the level of toxic, mutagenic propionaldehyde low. The chain is Bacterial microcompartment shell protein PduJ from Salmonella typhimurium (strain LT2 / SGSC1412 / ATCC 700720).